The primary structure comprises 162 residues: ATP synthase subunit b (162 aa).

A helical transmembrane segment spans residues 6 to 28 (LVTFVLTIVNILVLFYLLKRFLF).

The protein belongs to the ATPase B chain family. As to quaternary structure, F-type ATPases have 2 components, F(1) - the catalytic core - and F(0) - the membrane proton channel. F(1) has five subunits: alpha(3), beta(3), gamma(1), delta(1), epsilon(1). F(0) has three main subunits: a(1), b(2) and c(10-14). The alpha and beta chains form an alternating ring which encloses part of the gamma chain. F(1) is attached to F(0) by a central stalk formed by the gamma and epsilon chains, while a peripheral stalk is formed by the delta and b chains.

It is found in the cell membrane. In terms of biological role, f(1)F(0) ATP synthase produces ATP from ADP in the presence of a proton or sodium gradient. F-type ATPases consist of two structural domains, F(1) containing the extramembraneous catalytic core and F(0) containing the membrane proton channel, linked together by a central stalk and a peripheral stalk. During catalysis, ATP synthesis in the catalytic domain of F(1) is coupled via a rotary mechanism of the central stalk subunits to proton translocation. Functionally, component of the F(0) channel, it forms part of the peripheral stalk, linking F(1) to F(0). The polypeptide is ATP synthase subunit b (Natranaerobius thermophilus (strain ATCC BAA-1301 / DSM 18059 / JW/NM-WN-LF)).